A 253-amino-acid chain; its full sequence is Triosephosphate isomerase (253 aa).

8–10 (NWK) contacts substrate. H93 functions as the Electrophile in the catalytic mechanism. Residue E165 is the Proton acceptor of the active site. Residues G171, S210, and 231–232 (GG) each bind substrate.

The protein belongs to the triosephosphate isomerase family. As to quaternary structure, homodimer.

It is found in the cytoplasm. It catalyses the reaction D-glyceraldehyde 3-phosphate = dihydroxyacetone phosphate. It functions in the pathway carbohydrate biosynthesis; gluconeogenesis. It participates in carbohydrate degradation; glycolysis; D-glyceraldehyde 3-phosphate from glycerone phosphate: step 1/1. Involved in the gluconeogenesis. Catalyzes stereospecifically the conversion of dihydroxyacetone phosphate (DHAP) to D-glyceraldehyde-3-phosphate (G3P). The chain is Triosephosphate isomerase from Francisella tularensis subsp. novicida (strain U112).